The chain runs to 145 residues: D-aminoacyl-tRNA deacylase (145 aa).

A Gly-cisPro motif, important for rejection of L-amino acids motif is present at residues 137–138 (GP).

Belongs to the DTD family. Homodimer.

It is found in the cytoplasm. The catalysed reaction is glycyl-tRNA(Ala) + H2O = tRNA(Ala) + glycine + H(+). It catalyses the reaction a D-aminoacyl-tRNA + H2O = a tRNA + a D-alpha-amino acid + H(+). An aminoacyl-tRNA editing enzyme that deacylates mischarged D-aminoacyl-tRNAs. Also deacylates mischarged glycyl-tRNA(Ala), protecting cells against glycine mischarging by AlaRS. Acts via tRNA-based rather than protein-based catalysis; rejects L-amino acids rather than detecting D-amino acids in the active site. By recycling D-aminoacyl-tRNA to D-amino acids and free tRNA molecules, this enzyme counteracts the toxicity associated with the formation of D-aminoacyl-tRNA entities in vivo and helps enforce protein L-homochirality. This Pseudomonas savastanoi pv. phaseolicola (strain 1448A / Race 6) (Pseudomonas syringae pv. phaseolicola (strain 1448A / Race 6)) protein is D-aminoacyl-tRNA deacylase.